A 104-amino-acid chain; its full sequence is NADH-quinone oxidoreductase subunit K (104 aa).

3 helical membrane-spanning segments follow: residues 4-24 (VPAS…LFGA), 31-51 (VIVL…LVAF), and 67-87 (LFTM…LIAL).

The protein belongs to the complex I subunit 4L family. As to quaternary structure, NDH-1 is composed of 14 different subunits. Subunits NuoA, H, J, K, L, M, N constitute the membrane sector of the complex.

The protein resides in the cell membrane. The catalysed reaction is a quinone + NADH + 5 H(+)(in) = a quinol + NAD(+) + 4 H(+)(out). In terms of biological role, NDH-1 shuttles electrons from NADH, via FMN and iron-sulfur (Fe-S) centers, to quinones in the respiratory chain. The immediate electron acceptor for the enzyme in this species is believed to be a menaquinone. Couples the redox reaction to proton translocation (for every two electrons transferred, four hydrogen ions are translocated across the cytoplasmic membrane), and thus conserves the redox energy in a proton gradient. This Bacillus cereus (strain Q1) protein is NADH-quinone oxidoreductase subunit K.